The primary structure comprises 671 residues: Preterminal protein (671 aa).

The Nuclear localization signal motif lies at 380 to 389; it reads RLPVRRRRRR. Residues 386–411 form a disordered region; the sequence is RRRRVPPPPPPPEEEEGEALMEEEIE. Residues 397–411 are compositionally biased toward acidic residues; the sequence is PEEEEGEALMEEEIE. Serine 580 carries the post-translational modification O-(5'-phospho-DNA)-serine. A disordered region spans residues 645–671; it reads GADVPLPPLPAGPEPPLPPGARPRHRF. Over residues 649–665 the composition is skewed to pro residues; the sequence is PLPPLPAGPEPPLPPGA.

It belongs to the adenoviridae terminal protein family. In terms of assembly, heterodimer with the polymerase; this heterodimer binds to bp 9 to 18 of the genome. Interacts with host POU2F1; POU2F1 binds to the auxiliary sequences in the inverted terminal repeats and tethers the pTP-POL heterodimer to the origin DNA thereby participating in the assembly of the pre-initiation complex (POL-TP-DBP-NFIA-POU2F1). Post-translationally, preterminal protein is used to replicate viral genome, upon genomic encapsidation it is processed first into iTP and finally into TP by adenovirus protease.

It is found in the host nucleus matrix. In terms of biological role, protein covalently bound to the viral DNA that acts as a primer for viral genomic replication by DNA strand displacement. Assembles on the viral origin of replication in an initiation complex with viral polymerase, DBP, host NFIA and host POU2F1/OCT1. During initiation, the polymerase covalently couples the first dCTP with Ser-580 of pTP. The terminal protein stimulates the template activity over 20 fold compared to protein-free templates. Neo-synthesized viral genomes are linked to two preterminal proteins, one for each 5' end. These new genomes are encapsidated in the nucleus, and during capsid maturation by viral protease, preterminal protein is first cleaved into intermediary (iTP), then into mature TP. May play a role in host nuclear matrix localization of genomic DNA. The chain is Preterminal protein from Human adenovirus C serotype 5 (HAdV-5).